The chain runs to 78 residues: Acyl carrier protein (78 aa).

One can recognise a Carrier domain in the interval 2–77 (SDIAERVKKI…DAIKFLEKNA (76 aa)). An O-(pantetheine 4'-phosphoryl)serine modification is found at serine 37.

It belongs to the acyl carrier protein (ACP) family. In terms of processing, 4'-phosphopantetheine is transferred from CoA to a specific serine of apo-ACP by AcpS. This modification is essential for activity because fatty acids are bound in thioester linkage to the sulfhydryl of the prosthetic group.

The protein localises to the cytoplasm. The protein operates within lipid metabolism; fatty acid biosynthesis. Carrier of the growing fatty acid chain in fatty acid biosynthesis. This Xanthobacter autotrophicus (strain ATCC BAA-1158 / Py2) protein is Acyl carrier protein.